The sequence spans 89 residues: Small ribosomal subunit protein bS20 (89 aa).

Belongs to the bacterial ribosomal protein bS20 family.

Binds directly to 16S ribosomal RNA. In Wolbachia sp. subsp. Brugia malayi (strain TRS), this protein is Small ribosomal subunit protein bS20.